A 128-amino-acid chain; its full sequence is Cytochrome c-type biogenesis protein CcmE (128 aa).

The Cytoplasmic portion of the chain corresponds to 1–8 (MQKRVRNR). Residues 9–29 (LITIIICFCSAALGISIVLYN) traverse the membrane as a helical; Signal-anchor for type II membrane protein segment. Residues 30-128 (LEKNIVFFLP…KHDENYRPPS (99 aa)) are Periplasmic-facing. Heme contacts are provided by histidine 120 and tyrosine 124.

Belongs to the CcmE/CycJ family.

The protein resides in the cell inner membrane. Its function is as follows. Heme chaperone required for the biogenesis of c-type cytochromes. Transiently binds heme delivered by CcmC and transfers the heme to apo-cytochromes in a process facilitated by CcmF and CcmH. This chain is Cytochrome c-type biogenesis protein CcmE, found in Rickettsia felis (strain ATCC VR-1525 / URRWXCal2) (Rickettsia azadi).